The primary structure comprises 126 residues: Anti-adapter protein IraD (126 aa).

This sequence belongs to the GpW/Gp25 family. IraD subfamily. As to quaternary structure, interacts with RssB.

The protein localises to the cytoplasm. Inhibits RpoS proteolysis by regulating RssB activity, thereby increasing the stability of the sigma stress factor RpoS during oxidative stress. Its effect on RpoS stability is due to its interaction with RssB, which probably blocks the interaction of RssB with RpoS, and the consequent delivery of the RssB-RpoS complex to the ClpXP protein degradation pathway. This Salmonella arizonae (strain ATCC BAA-731 / CDC346-86 / RSK2980) protein is Anti-adapter protein IraD.